Here is a 664-residue protein sequence, read N- to C-terminus: DNA mismatch repair protein MutL (664 aa).

A disordered region spans residues 382-447; that stretch reads RKAGQEQQLQ…YGEPAPSKQQ (66 aa). A compositionally biased stretch (polar residues) spans 427-436; it reads RHTTSSNQSE.

Belongs to the DNA mismatch repair MutL/HexB family.

In terms of biological role, this protein is involved in the repair of mismatches in DNA. It is required for dam-dependent methyl-directed DNA mismatch repair. May act as a 'molecular matchmaker', a protein that promotes the formation of a stable complex between two or more DNA-binding proteins in an ATP-dependent manner without itself being part of a final effector complex. The protein is DNA mismatch repair protein MutL of Vibrio vulnificus (strain YJ016).